The chain runs to 397 residues: Putative protein FAM47D (397 aa).

The protein belongs to the FAM47 family.

The protein is Putative protein FAM47D (FAM47DP) of Homo sapiens (Human).